Here is a 481-residue protein sequence, read N- to C-terminus: Ribulose bisphosphate carboxylase large chain (481 aa).

Residues 1–2 (MS) constitute a propeptide that is removed on maturation. The residue at position 3 (Pro-3) is an N-acetylproline. Residue Lys-14 is modified to N6,N6,N6-trimethyllysine. Asn-123 and Thr-173 together coordinate substrate. Lys-175 functions as the Proton acceptor in the catalytic mechanism. A substrate-binding site is contributed by Lys-177. The Mg(2+) site is built by Lys-201, Asp-203, and Glu-204. Lys-201 bears the N6-carboxylysine mark. Residue His-294 is the Proton acceptor of the active site. Arg-295, His-327, and Ser-379 together coordinate substrate.

The protein belongs to the RuBisCO large chain family. Type I subfamily. Heterohexadecamer of 8 large chains and 8 small chains; disulfide-linked. The disulfide link is formed within the large subunit homodimers. Mg(2+) is required as a cofactor. In terms of processing, the disulfide bond which can form in the large chain dimeric partners within the hexadecamer appears to be associated with oxidative stress and protein turnover.

It is found in the plastid. The catalysed reaction is 2 (2R)-3-phosphoglycerate + 2 H(+) = D-ribulose 1,5-bisphosphate + CO2 + H2O. The enzyme catalyses D-ribulose 1,5-bisphosphate + O2 = 2-phosphoglycolate + (2R)-3-phosphoglycerate + 2 H(+). In terms of biological role, ruBisCO catalyzes two reactions: the carboxylation of D-ribulose 1,5-bisphosphate, the primary event in carbon dioxide fixation, as well as the oxidative fragmentation of the pentose substrate in the photorespiration process. Both reactions occur simultaneously and in competition at the same active site. The sequence is that of Ribulose bisphosphate carboxylase large chain from Cuscuta sandwichiana (Kauna'oa).